Here is a 506-residue protein sequence, read N- to C-terminus: Galactose/methyl galactoside import ATP-binding protein MglA (506 aa).

ABC transporter domains lie at 14–249 (LEMS…VGRS) and 264–506 (VILE…SLHL). Residue 46 to 53 (GENGAGKS) participates in ATP binding.

It belongs to the ABC transporter superfamily. Galactose/methyl galactoside importer (TC 3.A.1.2.3) family. In terms of assembly, the complex is composed of one ATP-binding protein (MglA), two transmembrane proteins (MglC) and a solute-binding protein (MglB).

It is found in the cell inner membrane. The catalysed reaction is D-galactose(out) + ATP + H2O = D-galactose(in) + ADP + phosphate + H(+). The enzyme catalyses methyl beta-D-galactoside(out) + ATP + H2O = methyl beta-D-galactoside(in) + ADP + phosphate + H(+). In terms of biological role, part of the ABC transporter complex MglABC involved in galactose/methyl galactoside import. Responsible for energy coupling to the transport system. The sequence is that of Galactose/methyl galactoside import ATP-binding protein MglA from Shigella boydii serotype 4 (strain Sb227).